Reading from the N-terminus, the 154-residue chain is Small ribosomal subunit protein uS11c (154 aa).

Belongs to the universal ribosomal protein uS11 family. As to quaternary structure, part of the 30S ribosomal subunit.

The protein localises to the plastid. In Helicosporidium sp. subsp. Simulium jonesii (Green alga), this protein is Small ribosomal subunit protein uS11c.